The primary structure comprises 134 residues: Profilin-2 (134 aa).

Cysteine 13 and cysteine 118 form a disulfide bridge. Positions alanine 84–threonine 100 match the Involved in PIP2 interaction motif. Position 114 is a phosphothreonine (threonine 114).

Belongs to the profilin family. Occurs in many kinds of cells as a complex with monomeric actin in a 1:1 ratio. In terms of processing, phosphorylated by MAP kinases.

It is found in the cytoplasm. Its subcellular location is the cytoskeleton. Binds to actin and affects the structure of the cytoskeleton. At high concentrations, profilin prevents the polymerization of actin, whereas it enhances it at low concentrations. The sequence is that of Profilin-2 from Olea europaea (Common olive).